Reading from the N-terminus, the 251-residue chain is Triosephosphate isomerase (251 aa).

9 to 11 (NWK) serves as a coordination point for substrate. Catalysis depends on histidine 94, which acts as the Electrophile. Glutamate 166 (proton acceptor) is an active-site residue. Residues glycine 172, serine 211, and 232-233 (GG) contribute to the substrate site.

It belongs to the triosephosphate isomerase family. Homodimer.

The protein localises to the cytoplasm. It catalyses the reaction D-glyceraldehyde 3-phosphate = dihydroxyacetone phosphate. It functions in the pathway carbohydrate biosynthesis; gluconeogenesis. Its pathway is carbohydrate degradation; glycolysis; D-glyceraldehyde 3-phosphate from glycerone phosphate: step 1/1. In terms of biological role, involved in the gluconeogenesis. Catalyzes stereospecifically the conversion of dihydroxyacetone phosphate (DHAP) to D-glyceraldehyde-3-phosphate (G3P). This chain is Triosephosphate isomerase, found in Xanthomonas axonopodis pv. citri (strain 306).